Reading from the N-terminus, the 147-residue chain is Cyclic di-AMP receptor B (147 aa).

One can recognise a CBS domain in the interval 18-78 (MIEADKVAHV…SIFGLERIEF (61 aa)). 3',3'-c-di-AMP is bound by residues K23, A25, T46, A47, and R131.

As to quaternary structure, homodimer. Forms a homodimer with a parallel, head-to-head assembly of the monomers. Under conditions of potassium starvation and corresponding low c-di-AMP levels, apo-DarB specifically interacts with the N-terminal region of the RelA. Under the same conditions, apo-DarB also specifically interacts with the C-terminal part of the pyruvate carboxylase.

Binds c-di-AMP. Binding of c-di-AMP to DarB inhibits the interaction with RelA and PYC. Functionally, involved in the c-di-AMP-dependent regulation of the bacterial stringent response. Modulates the activities of at least two enzymes under conditions of potassium limitation. Apo-DarB regulates the activity of the GTP pyrophosphokinase RelA by interacting directly with RelA, leading to stimulation of (p)ppGpp synthesis and induction of the stringent response. Apo-DarB also regulates pyruvate carboxylase (PYC) at two levels: directly at the protein level by binding to the enzyme and stimulating the synthesis of oxaloacetate and indirectly, by interaction with RelA, which leads to activation of the stringent response and to the increased expression of the pycA gene. Stimulation of these enzymes by DarB is prevented in the presence of cyclic di-AMP (c-di-AMP). The chain is Cyclic di-AMP receptor B from Bacillus subtilis (strain 168).